A 109-amino-acid polypeptide reads, in one-letter code: Ribonuclease (109 aa).

Residue glutamate 72 is the Proton acceptor of the active site. Histidine 101 functions as the Proton donor in the catalytic mechanism.

The protein belongs to the ribonuclease N1/T1 family.

The protein localises to the secreted. In terms of biological role, hydrolyzes phosphodiester bonds in RNA, poly- and oligoribonucleotides resulting in 3'-nucleoside monophosphates via 2',3'-cyclophosphate intermediates. The sequence is that of Ribonuclease from Heyndrickxia coagulans (Weizmannia coagulans).